We begin with the raw amino-acid sequence, 140 residues long: Large ribosomal subunit protein uL16 (140 aa).

Belongs to the universal ribosomal protein uL16 family. Part of the 50S ribosomal subunit.

In terms of biological role, binds 23S rRNA and is also seen to make contacts with the A and possibly P site tRNAs. The chain is Large ribosomal subunit protein uL16 from Geotalea uraniireducens (strain Rf4) (Geobacter uraniireducens).